Reading from the N-terminus, the 239-residue chain is MAMHTNGPVFAGWDGSVIQAQQLQQQLAQRVLLHDEVSATPQLLAGFDVGFEDDGQSTRAAAVLLDAHTLLPLETHVARVPTSMPYVPGLLSFRELPALLQALALLSRTPDLVFIDGQGIAHPRRLGIAAHFGVVTGLPCIGIAKQRLAGSFAEPGPERGDHTPILLGGAQIGWALRSKPRCNPLIVSPGHRVSMQGALGWNLRTLRSYRLPEPTRLADRLASRRGKMPALAADTPLLF.

Residues Asp-48 and Asp-116 each contribute to the Mg(2+) site.

It belongs to the endonuclease V family. Mg(2+) is required as a cofactor.

Its subcellular location is the cytoplasm. It carries out the reaction Endonucleolytic cleavage at apurinic or apyrimidinic sites to products with a 5'-phosphate.. Its function is as follows. DNA repair enzyme involved in the repair of deaminated bases. Selectively cleaves double-stranded DNA at the second phosphodiester bond 3' to a deoxyinosine leaving behind the intact lesion on the nicked DNA. The protein is Endonuclease V of Xanthomonas oryzae pv. oryzae (strain MAFF 311018).